The chain runs to 204 residues: Ancillary SecYEG translocon subunit (204 aa).

The Cytoplasmic portion of the chain corresponds to 1-23 (MAYSIEEEQEINQLKDWWKENGK). A helical transmembrane segment spans residues 24–42 (TIIVAFILGVGGMFGWRYW). Residues 43–204 (QTHQAEQIAQ…QMAKMKLNNL (162 aa)) lie on the Periplasmic side of the membrane.

The protein belongs to the YfgM family. As to quaternary structure, interacts with the SecYEG translocon. Forms a complex with PpiD.

Its subcellular location is the cell inner membrane. May mediate protein transfer from the SecYEG translocon to the periplasmic chaperone network via its periplasmic C-terminal region. The sequence is that of Ancillary SecYEG translocon subunit from Haemophilus influenzae (strain ATCC 51907 / DSM 11121 / KW20 / Rd).